Here is a 447-residue protein sequence, read N- to C-terminus: UDP-N-acetylmuramate--L-alanine ligase (447 aa).

108 to 114 (GSHGKTS) contributes to the ATP binding site.

This sequence belongs to the MurCDEF family.

The protein resides in the cytoplasm. It carries out the reaction UDP-N-acetyl-alpha-D-muramate + L-alanine + ATP = UDP-N-acetyl-alpha-D-muramoyl-L-alanine + ADP + phosphate + H(+). It participates in cell wall biogenesis; peptidoglycan biosynthesis. Functionally, cell wall formation. The polypeptide is UDP-N-acetylmuramate--L-alanine ligase (Listeria monocytogenes serotype 4b (strain F2365)).